A 291-amino-acid chain; its full sequence is Glutamate racemase (291 aa).

Residues 12 to 13 (DS) and 44 to 45 (YG) each bind substrate. Cys75 acts as the Proton donor/acceptor in catalysis. Residue 76-77 (NT) participates in substrate binding. Catalysis depends on Cys187, which acts as the Proton donor/acceptor. Substrate is bound at residue 188 to 189 (TH). A compositionally biased stretch (low complexity) spans 234–247 (ATQAAGARAQMAPS). Positions 234 to 257 (ATQAAGARAQMAPSAPEPKEGTPD) are disordered.

It belongs to the aspartate/glutamate racemases family.

The catalysed reaction is L-glutamate = D-glutamate. The protein operates within cell wall biogenesis; peptidoglycan biosynthesis. In terms of biological role, provides the (R)-glutamate required for cell wall biosynthesis. This chain is Glutamate racemase, found in Koribacter versatilis (strain Ellin345).